The sequence spans 335 residues: Tetraacyldisaccharide 4'-kinase (335 aa).

51–58 (HVGGAGKT) contacts ATP.

It belongs to the LpxK family.

The catalysed reaction is a lipid A disaccharide + ATP = a lipid IVA + ADP + H(+). The protein operates within glycolipid biosynthesis; lipid IV(A) biosynthesis; lipid IV(A) from (3R)-3-hydroxytetradecanoyl-[acyl-carrier-protein] and UDP-N-acetyl-alpha-D-glucosamine: step 6/6. Its function is as follows. Transfers the gamma-phosphate of ATP to the 4'-position of a tetraacyldisaccharide 1-phosphate intermediate (termed DS-1-P) to form tetraacyldisaccharide 1,4'-bis-phosphate (lipid IVA). The polypeptide is Tetraacyldisaccharide 4'-kinase (Nitrobacter hamburgensis (strain DSM 10229 / NCIMB 13809 / X14)).